Consider the following 263-residue polypeptide: 3-deoxy-manno-octulosonate cytidylyltransferase 1 (263 aa).

It belongs to the KdsB family.

The protein resides in the cytoplasm. The enzyme catalyses 3-deoxy-alpha-D-manno-oct-2-ulosonate + CTP = CMP-3-deoxy-beta-D-manno-octulosonate + diphosphate. Its pathway is nucleotide-sugar biosynthesis; CMP-3-deoxy-D-manno-octulosonate biosynthesis; CMP-3-deoxy-D-manno-octulosonate from 3-deoxy-D-manno-octulosonate and CTP: step 1/1. The protein operates within bacterial outer membrane biogenesis; lipopolysaccharide biosynthesis. Its function is as follows. Activates KDO (a required 8-carbon sugar) for incorporation into bacterial lipopolysaccharide in Gram-negative bacteria. The protein is 3-deoxy-manno-octulosonate cytidylyltransferase 1 of Burkholderia ambifaria (strain ATCC BAA-244 / DSM 16087 / CCUG 44356 / LMG 19182 / AMMD) (Burkholderia cepacia (strain AMMD)).